The chain runs to 219 residues: NADH-ubiquinone oxidoreductase 23 kDa subunit, mitochondrial (219 aa).

4Fe-4S ferredoxin-type domains lie at 111–140 (RRYP…IEAE) and 150–179 (TRYD…ESPN). Residues Cys120, Cys123, Cys126, Cys130, Cys159, Cys162, Cys165, and Cys169 each coordinate [4Fe-4S] cluster.

The protein belongs to the complex I 23 kDa subunit family. Complex I is composed of about 40 different subunits. It depends on [4Fe-4S] cluster as a cofactor.

Its subcellular location is the mitochondrion. It catalyses the reaction a ubiquinone + NADH + 5 H(+)(in) = a ubiquinol + NAD(+) + 4 H(+)(out). Functionally, core subunit of the mitochondrial membrane respiratory chain NADH dehydrogenase (Complex I) that is believed to belong to the minimal assembly required for catalysis. Complex I functions in the transfer of electrons from NADH to the respiratory chain. The immediate electron acceptor for the enzyme is believed to be ubiquinone. May donate electrons to ubiquinone. The polypeptide is NADH-ubiquinone oxidoreductase 23 kDa subunit, mitochondrial (nuo21.3c) (Neurospora crassa (strain ATCC 24698 / 74-OR23-1A / CBS 708.71 / DSM 1257 / FGSC 987)).